The chain runs to 332 residues: Glyceraldehyde-3-phosphate dehydrogenase (332 aa).

NAD(+) contacts are provided by residues 12–13 (RI), Asp-34, Lys-78, and Thr-120. D-glyceraldehyde 3-phosphate contacts are provided by residues 149–151 (SCT), Thr-180, 209–210 (TG), and Arg-232. The active-site Nucleophile is the Cys-150. Asn-314 contributes to the NAD(+) binding site.

Belongs to the glyceraldehyde-3-phosphate dehydrogenase family. As to quaternary structure, homotetramer.

Its subcellular location is the cytoplasm. It carries out the reaction D-glyceraldehyde 3-phosphate + phosphate + NAD(+) = (2R)-3-phospho-glyceroyl phosphate + NADH + H(+). It functions in the pathway carbohydrate degradation; glycolysis; pyruvate from D-glyceraldehyde 3-phosphate: step 1/5. Catalyzes the oxidative phosphorylation of glyceraldehyde 3-phosphate (G3P) to 1,3-bisphosphoglycerate (BPG) using the cofactor NAD. The first reaction step involves the formation of a hemiacetal intermediate between G3P and a cysteine residue, and this hemiacetal intermediate is then oxidized to a thioester, with concomitant reduction of NAD to NADH. The reduced NADH is then exchanged with the second NAD, and the thioester is attacked by a nucleophilic inorganic phosphate to produce BPG. The chain is Glyceraldehyde-3-phosphate dehydrogenase (gapA) from Buchnera aphidicola subsp. Schizaphis graminum (strain Sg).